Here is a 308-residue protein sequence, read N- to C-terminus: tRNA pseudouridine synthase B (308 aa).

Residue D47 is the Nucleophile of the active site.

This sequence belongs to the pseudouridine synthase TruB family. Type 1 subfamily.

The enzyme catalyses uridine(55) in tRNA = pseudouridine(55) in tRNA. In terms of biological role, responsible for synthesis of pseudouridine from uracil-55 in the psi GC loop of transfer RNAs. In Xanthomonas axonopodis pv. citri (strain 306), this protein is tRNA pseudouridine synthase B.